A 359-amino-acid chain; its full sequence is Nicotinate-nucleotide--dimethylbenzimidazole phosphoribosyltransferase (359 aa).

The active-site Proton acceptor is the E318.

The protein belongs to the CobT family. As to quaternary structure, homodimer.

The catalysed reaction is 5,6-dimethylbenzimidazole + nicotinate beta-D-ribonucleotide = alpha-ribazole 5'-phosphate + nicotinate + H(+). It functions in the pathway nucleoside biosynthesis; alpha-ribazole biosynthesis; alpha-ribazole from 5,6-dimethylbenzimidazole: step 1/2. Its function is as follows. Catalyzes the synthesis of alpha-ribazole-5'-phosphate from nicotinate mononucleotide (NAMN) and 5,6-dimethylbenzimidazole (DMB). This chain is Nicotinate-nucleotide--dimethylbenzimidazole phosphoribosyltransferase, found in Escherichia coli O9:H4 (strain HS).